The sequence spans 310 residues: tRNA uridine(34) hydroxylase (310 aa).

A Rhodanese domain is found at 124–218; it reads SDPEVLLIDT…YFEEVAQEES (95 aa). Cysteine 178 acts as the Cysteine persulfide intermediate in catalysis.

This sequence belongs to the TrhO family.

It carries out the reaction uridine(34) in tRNA + AH2 + O2 = 5-hydroxyuridine(34) in tRNA + A + H2O. In terms of biological role, catalyzes oxygen-dependent 5-hydroxyuridine (ho5U) modification at position 34 in tRNAs. This Pseudomonas entomophila (strain L48) protein is tRNA uridine(34) hydroxylase.